The chain runs to 62 residues: UPF0337 protein gsr0040 (62 aa).

2 stretches are compositionally biased toward basic and acidic residues: residues 1-15 and 27-62; these read MGID…KDVQ and DDPK…IDNV. Positions 1-62 are disordered; it reads MGIDKRAEAT…DQAHRTIDNV (62 aa).

It belongs to the UPF0337 (CsbD) family.

This chain is UPF0337 protein gsr0040, found in Gloeobacter violaceus (strain ATCC 29082 / PCC 7421).